The chain runs to 209 residues: Large ribosomal subunit protein uL3 (209 aa).

The segment at 133–152 (THGNSLSHRVPGSIGQNQTP) is disordered. Position 150 is an N5-methylglutamine (Gln-150).

The protein belongs to the universal ribosomal protein uL3 family. In terms of assembly, part of the 50S ribosomal subunit. Forms a cluster with proteins L14 and L19. In terms of processing, methylated by PrmB.

Its function is as follows. One of the primary rRNA binding proteins, it binds directly near the 3'-end of the 23S rRNA, where it nucleates assembly of the 50S subunit. This Sodalis glossinidius (strain morsitans) protein is Large ribosomal subunit protein uL3.